The following is a 616-amino-acid chain: MLNRYPLWKNLMVIFIVAIGILYSLPNIYGEDPAVQISGTRGQEANTSVLGQVQDVLKTNNLPTKSIVLENGSILARFTNTDDQLLAKDKIAERLGNNYTTALNLAPATPAWLSMFGANPMKWGLDLRGGVRFLMEVDMNATLVKRQEQLQDSLRGELRKEKIQYTAIKNTEHFGTLITLANVSQRAKAERIIRQLHPTLDITEPDADSINLGLSTAALNEARDLAIEQNLTILRKRVAELGVAEAVIQRQGAERIVIELPGVQDTARAKEILGATATLEFRIVNQNVTADAISRNMLPADSEVKYDRQGHPVALFKRAVLGGEHIINSSSGLDQHSSTPQVSVTLDSEGGEIMSQTTKKYYKKPMATLYVEYKDNGKKDENGKTILEKHEEVINVATIQGRFGSNFQITGVDSIAEAHNLSTLLKSGALIAPIQIVEERTIGPSLGAQNVEQGINASLWGLVAVIAFMLFYYKMFGVIASFALVINIVLLVGLMSILPGATLSMPGIAGIVLTLGMSVDANVLIFERIKEEIRNGRSIQQAINEGYNGAFTSIFDANLTTILTAIILYAVGTGPIQGFAITLSLGVAISMFTAITGTRALVNALYGGKQLKKLLI.

The next 6 membrane-spanning stretches (helical) occupy residues 11 to 31, 453 to 473, 475 to 495, 497 to 517, 547 to 569, and 585 to 605; these read LMVI…IYGE, QGIN…LFYY, MFGV…VGLM, ILPG…TLGM, YNGA…IILY, and LGVA…VNAL.

It belongs to the SecD/SecF family. SecD subfamily. In terms of assembly, forms a complex with SecF. Part of the essential Sec protein translocation apparatus which comprises SecA, SecYEG and auxiliary proteins SecDF-YajC and YidC.

It is found in the cell inner membrane. Part of the Sec protein translocase complex. Interacts with the SecYEG preprotein conducting channel. SecDF uses the proton motive force (PMF) to complete protein translocation after the ATP-dependent function of SecA. In Haemophilus influenzae (strain ATCC 51907 / DSM 11121 / KW20 / Rd), this protein is Protein translocase subunit SecD.